A 529-amino-acid chain; its full sequence is UDP-glucuronosyltransferase 2B28 (529 aa).

Residues 1 to 24 form the signal peptide; the sequence is MALKWTSVLLLIHLGCYFSSGSCG. An N6-succinyllysine modification is found at lysine 135. Asparagine 315 is a glycosylation site (N-linked (GlcNAc...) asparagine). A helical membrane pass occupies residues 495-517; sequence GFLLACVATVIFVVTKFCLFCFW.

Belongs to the UDP-glycosyltransferase family. Expressed in the liver, breast and kidney.

It is found in the endoplasmic reticulum membrane. The protein localises to the cytoplasm. It localises to the perinuclear region. The catalysed reaction is glucuronate acceptor + UDP-alpha-D-glucuronate = acceptor beta-D-glucuronoside + UDP + H(+). Its function is as follows. UDP-glucuronosyltransferase (UGT) that catalyzes phase II biotransformation reactions in which lipophilic substrates are conjugated with glucuronic acid to increase the metabolite's water solubility, thereby facilitating excretion into either the urine or bile. Essential for the elimination and detoxification of drugs, xenobiotics and endogenous compounds. Catalyzes the glucuronidation of endogenous steroid hormones such as androgens (androsterone, 3alpha-androstanediol) and estrogens (estradiol, estrone). Catalyzes the glucuronidation of bile acid substrates, which are natural detergents for dietary lipids absorption. Displays glucuronidation activity toward the phenolic compounds eugenol. Functionally, lack UDP-glucuronosyltransferase (UGT) activity. This Homo sapiens (Human) protein is UDP-glucuronosyltransferase 2B28.